The primary structure comprises 201 residues: Putative 3-methyladenine DNA glycosylase (201 aa).

It belongs to the DNA glycosylase MPG family.

The polypeptide is Putative 3-methyladenine DNA glycosylase (Rhodopseudomonas palustris (strain HaA2)).